We begin with the raw amino-acid sequence, 623 residues long: UvrABC system protein C (623 aa).

In terms of domain architecture, GIY-YIG spans 13–92 (DKPGVYIMKN…IKKYKPRYNI (80 aa)). The region spanning 204-239 (NDIIRELKEEMEKASMNLDFEKAADLRDKMLAAQKV) is the UVR domain.

Belongs to the UvrC family. Interacts with UvrB in an incision complex.

The protein resides in the cytoplasm. In terms of biological role, the UvrABC repair system catalyzes the recognition and processing of DNA lesions. UvrC both incises the 5' and 3' sides of the lesion. The N-terminal half is responsible for the 3' incision and the C-terminal half is responsible for the 5' incision. The chain is UvrABC system protein C from Clostridium acetobutylicum (strain ATCC 824 / DSM 792 / JCM 1419 / IAM 19013 / LMG 5710 / NBRC 13948 / NRRL B-527 / VKM B-1787 / 2291 / W).